Reading from the N-terminus, the 1154-residue chain is MSSSSRPGRASISPFRSRRTSAAGGGAGVAAAAHPPPARTSSGGRPSTPSSSSSAAGGGRPTTPSSSSAGGRPTTPSAAFARSTTPSSGRPTTPSSASSRAAGRAPPVAAVDAANAKENIMVTVRFRPLSPREINKGDEVAWYANGDNMVRNEYNPSIAYAFDKVFGPATTTRHVYDIAAQHVVSGAMEGINGTVFAYGVTSSGKTHTMHGEQKSPGIIPLAVKDVFSIIQDTPGREFLLRVSYLEIYNEVINDLLDPIGQNLRIREDAQGTYVEGIKEEVVLSPAHALSLIASGEEHRHVGSNNFNLVSSRSHTIFTLTIESSPSGENDEGEVKLSQLNLIDLAGSESSKTETTGLRRKEGSYINKSLLTLGTVIAKLTDGKATHIPYRDSKLTRLLQSSLSGHGRISLICTVTPASSNSEETHNTLKFAHRSKHIEIKASQNKIIDEKSLIKKYQKEITCLKEELQQLRRGMMGNGYIPPTDQEDLVSLKLQLEAGQVKLQSRLEEEEEAKAALMGRIQRLTKLILVSTKSSISSNVSGKASLRRRHSFGEDELAYLPDRKREYSMEDDDVSLDSEFSVEGKLDSNNPDESLRFDRRNRRRGMLGWFKLKKSDQLSGLSTSVDSESTASGSPSFSRSSQQKHPLLDLKDGRRKSMTRKGDDPALTDSFPGRTQAGDLFSAASRARHHLPSGTTIVDQIDLLQEQVKMLAGEVALCTSSLKRLSEQAANNPDDSQIQEQIEKLKNEIDEKKSHIRVLEQRMAQSLETTEDPAIRTEMSQTFSKLSTQLSEKTFELEIMSADNRILQDQLQAKVSENAELVETVAQLRQEIDNLLKTAKNEDNVASMQSSEPSSTSSNPRDLANEVASHSKMPSRTTEDHTESPLKSQVLLQAAEIENLKLDKLRLAEEKDGLEIHSQKLAEESSYAKELAAAAAVELKNLAEEVTRLSYENAKLNADLAAAKDQTRSSIQSDTKRRDQENGIFVEELQKELVASCQREAVLEDTLSQRARRESELLKVIEDAKCHEHDLENELANMWMLVAELKKENSQEDLFQFKATQNGYHSSKSDTGRMMSGMEASDNRNWDGVSVSTYEEAKAAYNVQRRRCKELEGIVSRLKGEDLRGLDVKVLEELQNFHVEALSKICQEKMANQVL.

Composition is skewed to low complexity over residues 1-14 (MSSS…SISP) and 29-109 (VAAA…PPVA). A chloroplast-targeting transit peptide spans 1–21 (MSSSSRPGRASISPFRSRRTS). A disordered region spans residues 1–109 (MSSSSRPGRA…RAAGRAPPVA (109 aa)). The 319-residue stretch at 119–437 (NIMVTVRFRP…LKFAHRSKHI (319 aa)) folds into the Kinesin motor domain. Position 199 to 206 (199 to 206 (GVTSSGKT)) interacts with ATP. The stretch at 441-523 (ASQNKIIDEK…AALMGRIQRL (83 aa)) forms a coiled coil. Residues 620–674 (LSTSVDSESTASGSPSFSRSSQQKHPLLDLKDGRRKSMTRKGDDPALTDSFPGRT) are disordered. The span at 628–640 (STASGSPSFSRSS) shows a compositional bias: low complexity. 2 coiled-coil regions span residues 734 to 761 (DSQI…LEQR) and 801 to 845 (ADNR…DNVA). The disordered stretch occupies residues 838–885 (AKNEDNVASMQSSEPSSTSSNPRDLANEVASHSKMPSRTTEDHTESPL). The segment covering 846–857 (SMQSSEPSSTSS) has biased composition (low complexity). Residues 894 to 967 (AEIENLKLDK…DLAAAKDQTR (74 aa)) adopt a coiled-coil conformation.

Belongs to the TRAFAC class myosin-kinesin ATPase superfamily. Kinesin family. KIN-7 subfamily.

It localises to the plastid. The protein localises to the chloroplast. This is Kinesin-like protein KIN-7E, chloroplastic from Oryza sativa subsp. japonica (Rice).